Here is a 252-residue protein sequence, read N- to C-terminus: Adaptation to cold protein B (252 aa).

In terms of assembly, interacts with AtcC, but not with AtcA and AtcJ. Interacts with the RNA polymerase subunits RpoB and RpoC.

Functionally, involved in cold adaptation. Directly interacts with the RNA polymerase and decreases its activity. May direct the DnaK chaperone to the RNA polymerase to sustain life at low temperatures. Overproduction prevents bacterial growth due to RNA polymerase inhibition. This Shewanella oneidensis (strain ATCC 700550 / JCM 31522 / CIP 106686 / LMG 19005 / NCIMB 14063 / MR-1) protein is Adaptation to cold protein B.